The primary structure comprises 198 residues: Ion-translocating oxidoreductase complex subunit B (198 aa).

Positions 1 to 28 (MIITTVYFILVAIAVLALIFGAILGFAS) are hydrophobic. The region spanning 34–92 (EADPIVEKIDALLPQSQCGQCGYPGCKPYAEAIANGDDITKCIPGGQTVIVNIAELMGV) is the 4Fe-4S domain. Residues Cys51, Cys54, Cys59, Cys75, Cys115, Cys118, Cys121, Cys125, Cys145, Cys148, Cys151, and Cys155 each contribute to the [4Fe-4S] cluster site. 4Fe-4S ferredoxin-type domains lie at 106–135 (MVAF…GTNK) and 136–165 (AMHT…MIKV).

The protein belongs to the 4Fe4S bacterial-type ferredoxin family. RnfB subfamily. As to quaternary structure, the complex is composed of six subunits: RnfA, RnfB, RnfC, RnfD, RnfE and RnfG. The cofactor is [4Fe-4S] cluster.

The protein localises to the cell inner membrane. Part of a membrane-bound complex that couples electron transfer with translocation of ions across the membrane. The chain is Ion-translocating oxidoreductase complex subunit B from Pasteurella multocida (strain Pm70).